The chain runs to 315 residues: Putative steroid dehydrogenase 2 (315 aa).

47 to 76 (ASWAVVTGATDGIGKSYSFELARRGFNVYI) lines the NADP(+) pocket. Residue Y202 is part of the active site.

This sequence belongs to the short-chain dehydrogenases/reductases (SDR) family. 17-beta-HSD 3 subfamily.

This is Putative steroid dehydrogenase 2 (stdh-2) from Caenorhabditis elegans.